Here is a 212-residue protein sequence, read N- to C-terminus: Redox-sensing transcriptional repressor Rex (212 aa).

The segment at residues 17 to 56 (LYYRIFKRFNTDGIEKASSKQIADALGIDSATVRRDFSYF) is a DNA-binding region (H-T-H motif). 91–96 (GCGNIG) serves as a coordination point for NAD(+).

This sequence belongs to the transcriptional regulatory Rex family. In terms of assembly, homodimer.

It is found in the cytoplasm. Functionally, modulates transcription in response to changes in cellular NADH/NAD(+) redox state. This is Redox-sensing transcriptional repressor Rex from Streptococcus agalactiae serotype III (strain NEM316).